Here is a 305-residue protein sequence, read N- to C-terminus: Tyrosine recombinase XerC (305 aa).

A Core-binding (CB) domain is found at 4 to 95; sequence TSIQALINKW…AVKNFYRFLE (92 aa). A Tyr recombinase domain is found at 116-298; that stretch reads LLPKALSEDD…SIKHLEAVYT (183 aa). Residues R159, K182, H250, R253, and H276 contribute to the active site. The O-(3'-phospho-DNA)-tyrosine intermediate role is filled by Y285.

This sequence belongs to the 'phage' integrase family. XerC subfamily. In terms of assembly, forms a cyclic heterotetrameric complex composed of two molecules of XerC and two molecules of XerD.

The protein resides in the cytoplasm. In terms of biological role, site-specific tyrosine recombinase, which acts by catalyzing the cutting and rejoining of the recombining DNA molecules. The XerC-XerD complex is essential to convert dimers of the bacterial chromosome into monomers to permit their segregation at cell division. It also contributes to the segregational stability of plasmids. The polypeptide is Tyrosine recombinase XerC (Rickettsia peacockii (strain Rustic)).